The following is a 411-amino-acid chain: Putative competence-damage inducible protein (411 aa).

This sequence belongs to the CinA family.

The sequence is that of Putative competence-damage inducible protein from Caldicellulosiruptor saccharolyticus (strain ATCC 43494 / DSM 8903 / Tp8T 6331).